A 1423-amino-acid polypeptide reads, in one-letter code: Protein phosphatase Slingshot homolog 2 (1423 aa).

The segment at 1–37 is disordered; that stretch reads MALVTVQRSPTPSTTSSPCASEADSGEEECRSQPRSI. Positions 9–18 are enriched in low complexity; it reads SPTPSTTSSP. Residues Ser-17, Ser-25, and Ser-36 each carry the phosphoserine modification. A DEK-C domain is found at 248 to 303; it reads ERTERLIKTKLREIMMQKDLENITSKEIRTELEMQMVCNLREFKEFIDNEMIVILG. The 142-residue stretch at 307-448 folds into the Tyrosine-protein phosphatase domain; sequence SPTQIFEHVF…LEEYQGILLA (142 aa). The Phosphocysteine intermediate role is filled by Cys-392. Ser-461, Ser-487, Ser-534, Ser-631, and Ser-633 each carry phosphoserine. Disordered stretches follow at residues 617–641, 664–684, 696–728, 797–825, 840–862, 877–954, 962–981, 1019–1041, 1070–1108, and 1144–1179; these read TSPL…CQTE, QETR…GGRN, PSKV…QSKA, ENKP…MCNP, EGEP…AKWY, LRQE…NATV, FDHL…TQQE, TSPN…EQGL, SLHP…SSLS, and TEQS…YKDS. Pro residues predominate over residues 621–635; sequence KDPPMSPDPESPSPQ. Residues 664-680 show a composition bias toward basic and acidic residues; the sequence is QETRSRSFSHSRMEELG. Positions 889–904 are enriched in polar residues; the sequence is TCTSLSTRKNSKNDSS. Residues 910–932 are compositionally biased toward basic and acidic residues; sequence PKGKSDEAPPEHSFVLKEPEMSK. Polar residues predominate over residues 941–953; sequence EAGSLSHSEQNAT. Positions 1019 to 1034 are enriched in polar residues; it reads TSPNHTGPGSEIATSE. Residues 1144–1172 are compositionally biased toward polar residues; that stretch reads TEQSSTTDEPSAEQVSWEESQESPLSSGS. The residue at position 1217 (Ser-1217) is a Phosphoserine. At Thr-1422 the chain carries Phosphothreonine.

This sequence belongs to the protein-tyrosine phosphatase family. Interacts with filamentous actin.

It is found in the cytoplasm. The protein localises to the cytoskeleton. Its subcellular location is the cell junction. It localises to the focal adhesion. The protein resides in the cytoplasmic vesicle. It is found in the secretory vesicle. The protein localises to the acrosome. The enzyme catalyses O-phospho-L-tyrosyl-[protein] + H2O = L-tyrosyl-[protein] + phosphate. It carries out the reaction O-phospho-L-seryl-[protein] + H2O = L-seryl-[protein] + phosphate. The catalysed reaction is O-phospho-L-threonyl-[protein] + H2O = L-threonyl-[protein] + phosphate. In terms of biological role, protein phosphatase which regulates actin filament dynamics. Dephosphorylates and activates the actin binding/depolymerizing factor cofilin, which subsequently binds to actin filaments and stimulates their disassembly. Inhibitory phosphorylation of cofilin is mediated by LIMK1, which may also be dephosphorylated and inactivated by this protein. Required for spermatogenesis. Involved in acrosome biogenesis, probably by regulating cofilin-mediated actin cytoskeleton remodeling during proacrosomal vesicle fusion and/or Golgi to perinuclear vesicle trafficking. This Homo sapiens (Human) protein is Protein phosphatase Slingshot homolog 2 (SSH2).